An 871-amino-acid polypeptide reads, in one-letter code: Alanine--tRNA ligase (871 aa).

Positions 563, 567, 665, and 669 each coordinate Zn(2+).

The protein belongs to the class-II aminoacyl-tRNA synthetase family. The cofactor is Zn(2+).

The protein localises to the cytoplasm. The catalysed reaction is tRNA(Ala) + L-alanine + ATP = L-alanyl-tRNA(Ala) + AMP + diphosphate. Its function is as follows. Catalyzes the attachment of alanine to tRNA(Ala) in a two-step reaction: alanine is first activated by ATP to form Ala-AMP and then transferred to the acceptor end of tRNA(Ala). Also edits incorrectly charged Ser-tRNA(Ala) and Gly-tRNA(Ala) via its editing domain. In Christiangramia forsetii (strain DSM 17595 / CGMCC 1.15422 / KT0803) (Gramella forsetii), this protein is Alanine--tRNA ligase.